The following is a 502-amino-acid chain: Probable glycine dehydrogenase (decarboxylating) subunit 2 (502 aa).

Lysine 273 is modified (N6-(pyridoxal phosphate)lysine).

This sequence belongs to the GcvP family. C-terminal subunit subfamily. As to quaternary structure, the glycine cleavage system is composed of four proteins: P, T, L and H. In this organism, the P 'protein' is a heterodimer of two subunits. Pyridoxal 5'-phosphate is required as a cofactor.

The enzyme catalyses N(6)-[(R)-lipoyl]-L-lysyl-[glycine-cleavage complex H protein] + glycine + H(+) = N(6)-[(R)-S(8)-aminomethyldihydrolipoyl]-L-lysyl-[glycine-cleavage complex H protein] + CO2. Its function is as follows. The glycine cleavage system catalyzes the degradation of glycine. The P protein binds the alpha-amino group of glycine through its pyridoxal phosphate cofactor; CO(2) is released and the remaining methylamine moiety is then transferred to the lipoamide cofactor of the H protein. This chain is Probable glycine dehydrogenase (decarboxylating) subunit 2, found in Thermococcus kodakarensis (strain ATCC BAA-918 / JCM 12380 / KOD1) (Pyrococcus kodakaraensis (strain KOD1)).